The primary structure comprises 277 residues: Energy-coupling factor transporter ATP-binding protein EcfA1 (277 aa).

The ABC transporter domain maps to Ile4–Asp238. Gly37–Ser44 lines the ATP pocket.

Belongs to the ABC transporter superfamily. Energy-coupling factor EcfA family. In terms of assembly, forms a stable energy-coupling factor (ECF) transporter complex composed of 2 membrane-embedded substrate-binding proteins (S component), 2 ATP-binding proteins (A component) and 2 transmembrane proteins (T component).

It is found in the cell membrane. Its function is as follows. ATP-binding (A) component of a common energy-coupling factor (ECF) ABC-transporter complex. Unlike classic ABC transporters this ECF transporter provides the energy necessary to transport a number of different substrates. This chain is Energy-coupling factor transporter ATP-binding protein EcfA1, found in Methanospirillum hungatei JF-1 (strain ATCC 27890 / DSM 864 / NBRC 100397 / JF-1).